We begin with the raw amino-acid sequence, 512 residues long: Kynurenine 3-monooxygenase (512 aa).

This sequence belongs to the aromatic-ring hydroxylase family. KMO subfamily. FAD serves as cofactor.

It localises to the mitochondrion outer membrane. The enzyme catalyses L-kynurenine + NADPH + O2 + H(+) = 3-hydroxy-L-kynurenine + NADP(+) + H2O. The protein operates within cofactor biosynthesis; NAD(+) biosynthesis; quinolinate from L-kynurenine: step 1/3. Functionally, catalyzes the hydroxylation of L-kynurenine (L-Kyn) to form 3-hydroxy-L-kynurenine (L-3OHKyn). Required for synthesis of quinolinic acid. The polypeptide is Kynurenine 3-monooxygenase (bna4) (Aspergillus clavatus (strain ATCC 1007 / CBS 513.65 / DSM 816 / NCTC 3887 / NRRL 1 / QM 1276 / 107)).